Reading from the N-terminus, the 542-residue chain is MAELTIDPTTIRKALDEFVESYKPSDTPTQEVGYVATAGDGIAHVTGLPGCMANELLTFEDGTLGLAFNLDAREIGVVILGDFTGIEEGQEVRRTGEVLSVPVGDGYLGRVVDPLGNPIDGLGEIKTEGRRILEAQAPDVMHRHPVDEPLSTGLKAIDAMTPIGRGQRQLIIGDRQTGKTAIAIDTIINQKRNWESGDPKKQVRCIYVAVGQKGSTIASVKQSLEEAGAMEYTTIVASPASDSAGFKYIAPYTGSAIGQHWMYNGKHVLIVFDDLSKQAEAYRSISLLLRRPPGREAYPGDVFYLHSRLLERCAKVSDDLGGGSMTGLPIVETKANDVSAYIPTNVISITDGQIFLQSDLFNANQRPAVDVGISVSRVGGAAQTKALKKVSGTLKISLAQYRSLESFAMFASDLDAASKAQLNRGAHLTELLKQPQFSPYSMEQEVVSVWAGTHGKMDDLPISDVLPFEKGMLDYLDHNTDILKTIRETEDFTADTEAALDKAVEAFRETFVTSAGKPLVEKKPDEKHTTPVEQEKIVAGEK.

173–180 (GDRQTGKT) serves as a coordination point for ATP. Residues 518–542 (PLVEKKPDEKHTTPVEQEKIVAGEK) form a disordered region. Positions 519–542 (LVEKKPDEKHTTPVEQEKIVAGEK) are enriched in basic and acidic residues.

Belongs to the ATPase alpha/beta chains family. F-type ATPases have 2 components, CF(1) - the catalytic core - and CF(0) - the membrane proton channel. CF(1) has five subunits: alpha(3), beta(3), gamma(1), delta(1), epsilon(1). CF(0) has three main subunits: a(1), b(2) and c(9-12). The alpha and beta chains form an alternating ring which encloses part of the gamma chain. CF(1) is attached to CF(0) by a central stalk formed by the gamma and epsilon chains, while a peripheral stalk is formed by the delta and b chains.

Its subcellular location is the cell membrane. The enzyme catalyses ATP + H2O + 4 H(+)(in) = ADP + phosphate + 5 H(+)(out). Its function is as follows. Produces ATP from ADP in the presence of a proton gradient across the membrane. The alpha chain is a regulatory subunit. In Bifidobacterium adolescentis (strain ATCC 15703 / DSM 20083 / NCTC 11814 / E194a), this protein is ATP synthase subunit alpha.